The following is a 404-amino-acid chain: Probable ribosomal oxygenase HI_0396 (404 aa).

The JmjC domain maps to 102 to 231 (ELGQLWNKFG…LIDGISKGFC (130 aa)). Residues His-135, Asp-137, and His-199 each contribute to the Fe cation site.

The protein belongs to the ROX family. Fe(2+) is required as a cofactor.

Its function is as follows. Oxygenase that catalyzes the hydroxylation of a ribosomal protein. The polypeptide is Probable ribosomal oxygenase HI_0396 (Haemophilus influenzae (strain ATCC 51907 / DSM 11121 / KW20 / Rd)).